We begin with the raw amino-acid sequence, 457 residues long: Phosphomethylpyrimidine synthase (457 aa).

Substrate is bound by residues Asn88, Met117, Tyr146, His182, 204–206 (SRG), 245–248 (DACR), and Glu284. His288 is a binding site for Zn(2+). Tyr311 provides a ligand contact to substrate. His352 is a Zn(2+) binding site. Cys428, Cys431, and Cys435 together coordinate [4Fe-4S] cluster.

This sequence belongs to the ThiC family. Requires [4Fe-4S] cluster as cofactor.

It catalyses the reaction 5-amino-1-(5-phospho-beta-D-ribosyl)imidazole + S-adenosyl-L-methionine = 4-amino-2-methyl-5-(phosphooxymethyl)pyrimidine + CO + 5'-deoxyadenosine + formate + L-methionine + 3 H(+). It participates in cofactor biosynthesis; thiamine diphosphate biosynthesis. Its function is as follows. Catalyzes the synthesis of the hydroxymethylpyrimidine phosphate (HMP-P) moiety of thiamine from aminoimidazole ribotide (AIR) in a radical S-adenosyl-L-methionine (SAM)-dependent reaction. The protein is Phosphomethylpyrimidine synthase of Clostridium tetani (strain Massachusetts / E88).